A 431-amino-acid chain; its full sequence is Glutamate-1-semialdehyde 2,1-aminomutase (431 aa).

N6-(pyridoxal phosphate)lysine is present on lysine 265.

This sequence belongs to the class-III pyridoxal-phosphate-dependent aminotransferase family. HemL subfamily. As to quaternary structure, homodimer. Pyridoxal 5'-phosphate serves as cofactor.

It localises to the cytoplasm. The catalysed reaction is (S)-4-amino-5-oxopentanoate = 5-aminolevulinate. Its pathway is porphyrin-containing compound metabolism; protoporphyrin-IX biosynthesis; 5-aminolevulinate from L-glutamyl-tRNA(Glu): step 2/2. This chain is Glutamate-1-semialdehyde 2,1-aminomutase, found in Vibrio vulnificus (strain CMCP6).